A 106-amino-acid chain; its full sequence is Large ribosomal subunit protein eL42 (106 aa).

This sequence belongs to the eukaryotic ribosomal protein eL42 family. In terms of assembly, component of the large ribosomal subunit.

It is found in the cytoplasm. Functionally, component of the large ribosomal subunit. The ribosome is a large ribonucleoprotein complex responsible for the synthesis of proteins in the cell. In Papio anubis (Olive baboon), this protein is Large ribosomal subunit protein eL42 (RPL36A).